The chain runs to 781 residues: Poly(ADP-ribose) glycohydrolase 1 (781 aa).

Disordered regions lie at residues 28–87 (AHQV…VSEN), 102–131 (SLDNVTERSEHTLDNHKSTEPMEEDVNNKS), and 206–232 (ADSTFVGEDSKNQRQSGTTSDEVDADS). Residues 106-121 (VTERSEHTLDNHKSTE) are compositionally biased toward basic and acidic residues.

This sequence belongs to the poly(ADP-ribose) glycohydrolase family. In terms of tissue distribution, expressed in head and tail neurons. Also detected in the central nerve cord and motor neurons.

It is found in the nucleus. The catalysed reaction is [(1''-&gt;2')-ADP-alpha-D-ribose](n) + H2O = [(1''-&gt;2')-ADP-alpha-D-ribose](n-1) + ADP-D-ribose. In terms of biological role, poly(ADP-ribose) synthesized after DNA damage is only present transiently and is rapidly degraded by poly(ADP-ribose) glycohydrolase. Poly(ADP-ribose) metabolism may be required for maintenance of the normal function of neuronal cells. The sequence is that of Poly(ADP-ribose) glycohydrolase 1 from Caenorhabditis elegans.